A 1006-amino-acid polypeptide reads, in one-letter code: MKLSSACAIALLAAQAAGASIKHRINGFTLTEHSDPAKRELLQKYVTWDDKSLFINGERIMIFSGEFHPFRLPVKELQLDIFQKVKALGFNCVSFYVDWALVEGKPGEYRADGIFDLEPFFDAASEAGIYLLARPGPYINAESSGGGFPGWLQRVNGTLRSSDKAYLDATDNYVSHVAATIAKYQITNGGPIILYQPENEYTSGCSGVEFPDPVYMQYVEDQARNAGVVIPLINNDASASGNNAPGTGKGAVDIYGHDSYPLGFDCANPTVWPSGDLPTNFRTLHLEQSPTTPYAIVEFQGGSYDPWGGPGFAACSELLNNEFERVFYKNDFSFQIAIMNLYMIFGGTNWGNLGYPNGYTSYDYGSAVTESRNITREKYSELKLLGNFAKVSPGYLTASPGNLTTSGYADTTDLTVTPLLGNSTGSFFVVRHSDYSSEESTSYKLRLPTSAGSVTIPQLGGTLTLNGRDSKIHVTDHNVSGTNIIYSTAEVFTWKKFADGKVLVLYGGAGEHHELAISTKSNVTVIEGSESGISSKQTSSSVVVGWDVSTTRRIIQVGDLKILLLDRNSAYNYWVPQLATDGTSPGFSTPEKVASSIIVKAGYLVRTAYLKGSGLYLTADFNATTSVEVIGVPSTAKNLFINGDKTSHTVDKNGIWSATVDYNAPDISLPSLKDLDWKYVDTLPEIQSSYDDSLWPAADLKQTKNTLRSLTTPTSLYSSDYGFHTGYLLYRGHFTATGNESTFAIDTQGGSAFGSSVWLNGTYLGSWTGLYANSDYNATYNLPQLQAGKTYVITVVIDNMGLEENWTVGEDLMKSPRGISTSCLPDGQAAPISWKLTGNLGGEDYEDKVRGPLNEGGLYAERQGFHQPEPPSQNWKSSSPLEGLSEAGIGFYSASFDLDLPKDGMSHCSSTSVTALRHPRTACRSTSTDIVCEIHKQHRTSDQLPCPRGNPELSRNELVGGDPVALDSAGGKLESLELSYTTPVLTALGEVESVDQPKYKKRKGAY.

An N-terminal signal peptide occupies residues 1–19; sequence MKLSSACAIALLAAQAAGA. N-linked (GlcNAc...) asparagine glycosylation is present at Asn156. Residue Glu200 is the Proton donor of the active site. Glu298 serves as the catalytic Nucleophile. Asn373, Asn402, Asn422, Asn478, Asn522, Asn622, Asn739, Asn760, Asn777, and Asn805 each carry an N-linked (GlcNAc...) asparagine glycan.

The protein belongs to the glycosyl hydrolase 35 family.

The catalysed reaction is Hydrolysis of terminal non-reducing beta-D-galactose residues in beta-D-galactosides.. Functionally, cleaves beta-linked terminal galactosyl residues from gangliosides, glycoproteins, and glycosaminoglycans. This Aspergillus niger protein is Beta-galactosidase (lacA).